Consider the following 95-residue polypeptide: Nucleoid-associated protein MMOB0740 (95 aa).

The protein belongs to the YbaB/EbfC family. In terms of assembly, homodimer.

The protein localises to the cytoplasm. It localises to the nucleoid. In terms of biological role, binds to DNA and alters its conformation. May be involved in regulation of gene expression, nucleoid organization and DNA protection. The sequence is that of Nucleoid-associated protein MMOB0740 from Mycoplasma mobile (strain ATCC 43663 / 163K / NCTC 11711) (Mesomycoplasma mobile).